The chain runs to 207 residues: Glycerol-3-phosphate acyltransferase (207 aa).

6 consecutive transmembrane segments (helical) span residues 8-28 (NIVFYLLAYLIGSIPFGLILA), 64-84 (LGIATVLLDALKGTLVLLVGI), 92-112 (TLWAIAVLAVLGHCYSIYLGL), 122-142 (LGVYIVLIPYSTLIGAVVWIV), 154-174 (SLLGLIAAVISAIFIYNGLGI), and 176-196 (SNIPMYLIAFIILYKHIPNIV).

The protein belongs to the PlsY family. As to quaternary structure, probably interacts with PlsX.

It localises to the cell inner membrane. The catalysed reaction is an acyl phosphate + sn-glycerol 3-phosphate = a 1-acyl-sn-glycero-3-phosphate + phosphate. The protein operates within lipid metabolism; phospholipid metabolism. Functionally, catalyzes the transfer of an acyl group from acyl-phosphate (acyl-PO(4)) to glycerol-3-phosphate (G3P) to form lysophosphatidic acid (LPA). This enzyme utilizes acyl-phosphate as fatty acyl donor, but not acyl-CoA or acyl-ACP. The chain is Glycerol-3-phosphate acyltransferase from Aliarcobacter butzleri (strain RM4018) (Arcobacter butzleri).